The sequence spans 1503 residues: Transient receptor potential cation channel subfamily M member 2 (1503 aa).

The disordered stretch occupies residues methionine 1–leucine 20. Residues methionine 1 to glycine 752 lie on the Cytoplasmic side of the membrane. ADP-D-ribose contacts are provided by threonine 174, asparagine 179, arginine 302, glycine 333, and threonine 336. The residue at position 740 (threonine 740) is a Phosphothreonine. Residues leucine 753–glycine 769 lie within the membrane without spanning it. Over leucine 770–proline 795 the chain is Cytoplasmic. Residues valine 796–valine 816 traverse the membrane as a helical segment. Residues leucine 817–tryptophan 827 are Extracellular-facing. The chain crosses the membrane as a helical span at residues cysteine 828–phenylalanine 848. Ca(2+) contacts are provided by glutamate 843 and glutamine 846. Residues tyrosine 849–phenylalanine 867 are Cytoplasmic-facing. Residues tryptophan 868–isoleucine 888 form a helical membrane-spanning segment. Ca(2+) is bound at residue asparagine 869. Residues proline 889–arginine 896 are Extracellular-facing. A helical membrane pass occupies residues valine 897–serine 917. Residues lysine 918 to arginine 929 lie on the Cytoplasmic side of the membrane. Residues methionine 930–valine 950 traverse the membrane as a helical segment. Topologically, residues alanine 951–alanine 970 are extracellular. Residues valine 971–tyrosine 985 constitute an intramembrane region (pore-forming). A Selectivity filter motif is present at residues phenylalanine 979–isoleucine 982. Residues isoleucine 986 to glutamate 1022 are Extracellular-facing. Cysteine 996 and cysteine 1008 are joined by a disulfide. Residues tryptophan 1023–leucine 1044 traverse the membrane as a helical segment. The Cytoplasmic segment spans residues isoleucine 1045–alanine 1079. Residue glutamate 1073 coordinates Ca(2+). An intramembrane segment occupies alanine 1080–valine 1098. The Cytoplasmic portion of the chain corresponds to leucine 1099–tyrosine 1503. Positions glutamate 1206–serine 1237 are disordered. The Nudix hydrolase domain occupies arginine 1354–glutamate 1498. Leucine 1381 and serine 1382 together coordinate ADP-D-ribose. The short motif at glycine 1390–tryptophan 1411 is the Nudix box element. Residues aspartate 1431, arginine 1433, tyrosine 1485, and asparagine 1487 each contribute to the ADP-D-ribose site.

The protein belongs to the transient receptor (TC 1.A.4) family. LTrpC subfamily. TRPM2 sub-subfamily. Homotetramer. Isoform 1 can interact with isoform 3. This interaction decreases Ca(2+) influx through isoform 1 and suppresses susceptibility to oxidative stress-induced cell death. Phosphorylation of TRPM2 at Thr-740 by protein kinase C (PKC) counteracts the effect of cytosolic Ca(2+) and elevates the temperature threshold. Highly expressed in brain and peripheral blood cells, such as neutrophils. Also detected in bone marrow, spleen, heart, liver and lung. Isoform 2 is found in neutrophil granulocytes.

The protein resides in the cell membrane. Its subcellular location is the perikaryon. The protein localises to the cell projection. It is found in the cytoplasmic vesicle. It localises to the lysosome. The catalysed reaction is Ca(2+)(in) = Ca(2+)(out). The enzyme catalyses Na(+)(in) = Na(+)(out). Activated by intracellular ADP-ribose, beta-NAD (NAD(+)) and similar compounds, and by oxidative stress caused by reactive oxygen or nitrogen species. Ca(2+) and PI(4,5)P2 are required for channel opening by ADP-ribose. Activation by ADP-ribose and beta-NAD is strongly increased by moderate heat (35 to 40 degrees Celsius). Likewise, reactive oxygen species lower the threshold for activation by moderate heat (37 degrees Celsius). Activated by moderate heat (35 to 40 degrees Celsius). Inactivated by exposure to extracellular pH between 4.0 and 6.5; irreversibly inactivated when open channels are exposed to extracellular pH between 4.0 and 6.5, while pre-exposure of closed channels to extracellular pH 5.5 gives rise to currents that rapidly inactivate, but protects against irreversible inactivation. Inactivated by intracellular ATP. Activated by arachidonic acid. Inhibited by 2-aminoethyl diphenylborinate (2-APB). In terms of biological role, nonselective, voltage-independent cation channel that mediates Na(+) and Ca(2+) influx, leading to increased cytoplasmic Ca(2+) levels. Functions as a ligand-gated ion channel, gated by intracellular adenosine diphosphate ribose (ADP-ribose), Ca(2+), warm temperature, and oxidative stress. The precise physiological activators are under debate; the true, physiological activators may be ADP-ribose and ADP-ribose-2'-phosphate. Binding of ADP-ribose to the cytoplasmic Nudix domain causes a conformation change; the channel is primed but still requires Ca(2+) binding to trigger channel opening. Extracellular Ca(2+) passes through the channel and increases channel activity. Contributes to Ca(2+) release from intracellular stores in response to ADP-ribose. Plays a role in numerous processes that involve signaling via intracellular Ca(2+) levels. Besides, mediates the release of lysosomal Zn(2+) stores in response to reactive oxygen species, leading to increased cytosolic Zn(2+) levels. Plays a role in mediating behavorial and physiological responses to moderate heat and thereby contributes to body temperature homeostasis. Plays a role in insulin secretion, a process that requires increased cytoplasmic Ca(2+) levels. Required for normal IFNG and cytokine secretion and normal innate immune immunity in response to bacterial infection. Required for normal phagocytosis and cytokine release by macrophages exposed to zymosan (in vitro). Plays a role in dendritic cell differentiation and maturation, and in dendritic cell chemotaxis via its role in regulating cytoplasmic Ca(2+) levels. Plays a role in the regulation of the reorganization of the actin cytoskeleton and filopodia formation in response to reactive oxygen species via its role in increasing cytoplasmic Ca(2+) and Zn(2+) levels. Confers susceptibility to cell death following oxidative stress. Functionally, lacks cation channel activity. Does not mediate cation transport in response to oxidative stress or ADP-ribose. Its function is as follows. Lacks cation channel activity and negatively regulates the channel activity of isoform 1. Negatively regulates susceptibility to cell death in reposponse to oxidative stress. This chain is Transient receptor potential cation channel subfamily M member 2 (TRPM2), found in Homo sapiens (Human).